Here is a 328-residue protein sequence, read N- to C-terminus: Aspartate carbamoyltransferase catalytic subunit (328 aa).

Carbamoyl phosphate-binding residues include Arg64 and Thr65. Lys92 is a binding site for L-aspartate. The carbamoyl phosphate site is built by Arg114, His144, and Gln147. Residues Arg177 and Arg232 each coordinate L-aspartate. Gly273 and Pro274 together coordinate carbamoyl phosphate.

It belongs to the aspartate/ornithine carbamoyltransferase superfamily. ATCase family. As to quaternary structure, heterododecamer (2C3:3R2) of six catalytic PyrB chains organized as two trimers (C3), and six regulatory PyrI chains organized as three dimers (R2).

It catalyses the reaction carbamoyl phosphate + L-aspartate = N-carbamoyl-L-aspartate + phosphate + H(+). The protein operates within pyrimidine metabolism; UMP biosynthesis via de novo pathway; (S)-dihydroorotate from bicarbonate: step 2/3. In terms of biological role, catalyzes the condensation of carbamoyl phosphate and aspartate to form carbamoyl aspartate and inorganic phosphate, the committed step in the de novo pyrimidine nucleotide biosynthesis pathway. This Halorhodospira halophila (strain DSM 244 / SL1) (Ectothiorhodospira halophila (strain DSM 244 / SL1)) protein is Aspartate carbamoyltransferase catalytic subunit.